Consider the following 458-residue polypeptide: Vitamin K-dependent protein C (458 aa).

A signal peptide spans 1–27 (IPDDVGYRNQKTASKEGVCVVSKCQDG). The propeptide occupies 28–36 (PNTLPRAKR). The 46-residue stretch at 37–82 (ANSFLEELRPSSLERECVEEVCDLEEAKEIFQSVDDTLAFWYKYVD) folds into the Gla domain. E42, E43, E50, E52, E55, E56, E61, E62, and E65 each carry 4-carboxyglutamate. An intrachain disulfide couples C53 to C58. Intrachain disulfides connect C86/C105, C95/C100, C99/C114, and C116/C125. 2 consecutive EGF-like domains span residues 91–126 (SEHPCSSQCCGHGTCADSIGGFSCQCHGGWEGSFCQ) and 130–170 (RFSN…LQCE). A (3R)-3-hydroxyaspartate modification is found at D107. An N-linked (GlcNAc...) asparagine glycan is attached at N133. Disulfide bonds link C134–C145, C141–C154, C156–C169, C177–C316, and C235–C251. The region spanning 210 to 447 (IDGKLTRRGD…YLDWIHSHIE (238 aa)) is the Peptidase S1 domain. The Charge relay system role is filled by H250. A glycan (N-linked (GlcNAc...) asparagine) is linked at N287. D296 (charge relay system) is an active-site residue. The N-linked (GlcNAc...) asparagine glycan is linked to N352. 2 cysteine pairs are disulfide-bonded: C370-C384 and C395-C423. The active-site Charge relay system is S399.

The protein belongs to the peptidase S1 family. Synthesized as a single chain precursor, which is cleaved into a light chain and a heavy chain held together by a disulfide bond. The enzyme is then activated by thrombin, which cleaves a tetradecapeptide from the amino end of the heavy chain; this reaction, which occurs at the surface of endothelial cells, is strongly promoted by thrombomodulin. In terms of processing, the vitamin K-dependent, enzymatic carboxylation of some Glu residues allows the modified protein to bind calcium. Post-translationally, the iron and 2-oxoglutarate dependent 3-hydroxylation of aspartate and asparagine is (R) stereospecific within EGF domains. As to expression, plasma; synthesized in the liver.

It localises to the secreted. The protein localises to the golgi apparatus. Its subcellular location is the endoplasmic reticulum. It catalyses the reaction Degradation of blood coagulation factors Va and VIIIa.. Protein C is a vitamin K-dependent serine protease that regulates blood coagulation by inactivating factors Va and VIIIa in the presence of calcium ions and phospholipids. Exerts a protective effect on the endothelial cell barrier function. The polypeptide is Vitamin K-dependent protein C (PROC) (Oryctolagus cuniculus (Rabbit)).